The primary structure comprises 215 residues: Kunitz trypsin inhibitor 2 (215 aa).

The first 23 residues, 1-23 (MKNPSVISFLIILLFAATICTHG), serve as a signal peptide directing secretion. The cysteines at positions 67 and 114 are disulfide-linked. N-linked (GlcNAc...) asparagine glycosylation is present at asparagine 145.

Belongs to the protease inhibitor I3 (leguminous Kunitz-type inhibitor) family. In terms of assembly, interacts with RD21A. Interacts with RD21B and RD21C. In terms of tissue distribution, expressed in vascular bundles of the carpels, the transmitting tract of the style and septum epidermis. Expressed in etiolated seedlings.

It is found in the secreted. Its subcellular location is the cell wall. The protein localises to the extracellular space. The protein resides in the apoplast. It localises to the endoplasmic reticulum. Water-soluble and chlorophyll-binding protein that probably does not function as a chloroplast chlorophyll carrier and is not involved in photosynthesis. Involved in the control of cell death in the transmitting tract and septum epidermis during flower development. Binds and inhibits the activity of the cysteine protease RD21A as a pro-death protein. May play a role in herbivore resistance activation during seedling greening. The chain is Kunitz trypsin inhibitor 2 from Arabidopsis thaliana (Mouse-ear cress).